A 158-amino-acid chain; its full sequence is Phosphopantetheine adenylyltransferase (158 aa).

Thr10 contributes to the substrate binding site. ATP is bound by residues 10-11 and His18; that span reads TF. Residues Lys42, Leu74, and Arg88 each coordinate substrate. ATP-binding positions include 89–91, Glu99, and 124–130; these read GLR and YSFISSS.

Belongs to the bacterial CoaD family. Homohexamer. The cofactor is Mg(2+).

It is found in the cytoplasm. The enzyme catalyses (R)-4'-phosphopantetheine + ATP + H(+) = 3'-dephospho-CoA + diphosphate. It functions in the pathway cofactor biosynthesis; coenzyme A biosynthesis; CoA from (R)-pantothenate: step 4/5. Its function is as follows. Reversibly transfers an adenylyl group from ATP to 4'-phosphopantetheine, yielding dephospho-CoA (dPCoA) and pyrophosphate. In Erwinia tasmaniensis (strain DSM 17950 / CFBP 7177 / CIP 109463 / NCPPB 4357 / Et1/99), this protein is Phosphopantetheine adenylyltransferase.